The following is a 747-amino-acid chain: Putative ankyrin repeat protein FPV222 (747 aa).

ANK repeat units lie at residues 38-67, 103-132, 136-165, 169-198, 202-231, 234-263, 294-323, 328-357, 361-393, 397-426, 430-460, 464-493, 495-524, and 529-559; these read DNCTMLYTAVEHRYIDIIKLLLDHGADPNI, NYRNTFFVYNENRNLEIAKMLIQNGALVNM, KNITPLHIASSSGSYKMVELLLLHGANTNA, YGETSLHYSVSSNDLNISELLIENGTNVNV, DSITALIIAVEIMSIDLVRLLLDKGADTNA, LERFKLYVTETKQNNNILKYLNTNNVNTNV, PCTVPVTLATRKGSKELLEILLEYGCNPDI, TSTYAMHYAVIRKHYEMLNILIRYDAYTDV, QQNTPAHYAVKLPISESCKYLKLLKLAGASFNL, KGRTPLHTACKYNNTEAVKYLIESGCDTNI, MSFTPLNYAVYYEREDTVKILLESGCVDPNL, KEVSPIIQAIKRNNKNIIKMLLNAGIDIKP, NECYGLHMLAALHNKDLLKWLLCTISELEV, and DHYVPLASYVAELSDIRIMEILIEKGLDLNK.

This Vertebrata (FPV) protein is Putative ankyrin repeat protein FPV222.